The chain runs to 502 residues: Phenylalanine--tRNA ligase alpha subunit (502 aa).

L-phenylalanine contacts are provided by residues Thr339, 382–384, and Tyr422; that span reads QIE. Glu424 contacts Mg(2+). Residue Phe448 coordinates L-phenylalanine.

It belongs to the class-II aminoacyl-tRNA synthetase family. Phe-tRNA synthetase alpha subunit type 2 subfamily. Tetramer of two alpha and two beta subunits. It depends on Mg(2+) as a cofactor.

It localises to the cytoplasm. The enzyme catalyses tRNA(Phe) + L-phenylalanine + ATP = L-phenylalanyl-tRNA(Phe) + AMP + diphosphate + H(+). The protein is Phenylalanine--tRNA ligase alpha subunit of Halobacterium salinarum (strain ATCC 29341 / DSM 671 / R1).